Here is a 388-residue protein sequence, read N- to C-terminus: Mannitol-1-phosphate 5-dehydrogenase (388 aa).

5-16 (AVHFGGGNIGRG) contributes to the NAD(+) binding site. Residue lysine 213 is part of the active site.

It belongs to the mannitol dehydrogenase family. As to quaternary structure, monomer.

The enzyme catalyses D-mannitol 1-phosphate + NAD(+) = beta-D-fructose 6-phosphate + NADH + H(+). Functionally, catalyzes the NAD(H)-dependent interconversion of D-fructose 6-phosphate and D-mannitol 1-phosphate in the mannitol metabolic pathway. The polypeptide is Mannitol-1-phosphate 5-dehydrogenase (Ajellomyces capsulatus (strain NAm1 / WU24) (Darling's disease fungus)).